Consider the following 197-residue polypeptide: dTTP/UTP pyrophosphatase (197 aa).

Residue D70 is the Proton acceptor of the active site.

Belongs to the Maf family. YhdE subfamily. A divalent metal cation serves as cofactor.

The protein localises to the cytoplasm. The enzyme catalyses dTTP + H2O = dTMP + diphosphate + H(+). The catalysed reaction is UTP + H2O = UMP + diphosphate + H(+). Nucleoside triphosphate pyrophosphatase that hydrolyzes dTTP and UTP. May have a dual role in cell division arrest and in preventing the incorporation of modified nucleotides into cellular nucleic acids. The chain is dTTP/UTP pyrophosphatase (yceF2) from Shigella sonnei (strain Ss046).